A 331-amino-acid polypeptide reads, in one-letter code: D-lactate dehydrogenase (331 aa).

NAD(+) contacts are provided by residues 155–156, Asp175, 206–207, Asn212, 233–235, and Asp259; these read HI, VP, and AAR. The active site involves Arg235. The active site involves Glu264. His296 functions as the Proton donor in the catalytic mechanism.

The protein belongs to the D-isomer specific 2-hydroxyacid dehydrogenase family. As to quaternary structure, homodimer.

It catalyses the reaction (R)-lactate + NAD(+) = pyruvate + NADH + H(+). The protein is D-lactate dehydrogenase of Leuconostoc mesenteroides subsp. cremoris.